A 558-amino-acid polypeptide reads, in one-letter code: DNA ligase B (558 aa).

K126 acts as the N6-AMP-lysine intermediate in catalysis.

Belongs to the NAD-dependent DNA ligase family. LigB subfamily.

It carries out the reaction NAD(+) + (deoxyribonucleotide)n-3'-hydroxyl + 5'-phospho-(deoxyribonucleotide)m = (deoxyribonucleotide)n+m + AMP + beta-nicotinamide D-nucleotide.. Its function is as follows. Catalyzes the formation of phosphodiester linkages between 5'-phosphoryl and 3'-hydroxyl groups in double-stranded DNA using NAD as a coenzyme and as the energy source for the reaction. This is DNA ligase B from Pseudomonas fluorescens (strain Pf0-1).